Consider the following 358-residue polypeptide: Isopentenyl-diphosphate delta-isomerase (358 aa).

Residue 12–13 (RK) participates in substrate binding. Residues 69 to 71 (AMT), serine 99, and asparagine 128 each bind FMN. Residue glutamine 158 participates in substrate binding. Glutamate 159 serves as a coordination point for Mg(2+). FMN-binding positions include lysine 190, threonine 220, 267-269 (GIR), and 288-289 (AG).

Belongs to the IPP isomerase type 2 family. As to quaternary structure, homooctamer. Dimer of tetramers. Requires FMN as cofactor. NADPH is required as a cofactor. The cofactor is Mg(2+).

The protein resides in the cytoplasm. The enzyme catalyses isopentenyl diphosphate = dimethylallyl diphosphate. Its function is as follows. Involved in the biosynthesis of isoprenoids. Catalyzes the 1,3-allylic rearrangement of the homoallylic substrate isopentenyl (IPP) to its allylic isomer, dimethylallyl diphosphate (DMAPP). The sequence is that of Isopentenyl-diphosphate delta-isomerase from Listeria monocytogenes serotype 4b (strain F2365).